The chain runs to 601 residues: Elongation factor 4 (601 aa).

The 183-residue stretch at 6–188 (DHIRNFSIVA…AIVHQLPPPR (183 aa)) folds into the tr-type G domain. Residues 18 to 23 (DHGKST) and 135 to 138 (NKVD) each bind GTP.

It belongs to the TRAFAC class translation factor GTPase superfamily. Classic translation factor GTPase family. LepA subfamily.

It is found in the cell inner membrane. The enzyme catalyses GTP + H2O = GDP + phosphate + H(+). Required for accurate and efficient protein synthesis under certain stress conditions. May act as a fidelity factor of the translation reaction, by catalyzing a one-codon backward translocation of tRNAs on improperly translocated ribosomes. Back-translocation proceeds from a post-translocation (POST) complex to a pre-translocation (PRE) complex, thus giving elongation factor G a second chance to translocate the tRNAs correctly. Binds to ribosomes in a GTP-dependent manner. This is Elongation factor 4 from Mesorhizobium japonicum (strain LMG 29417 / CECT 9101 / MAFF 303099) (Mesorhizobium loti (strain MAFF 303099)).